A 358-amino-acid polypeptide reads, in one-letter code: Protein-glutamate methylesterase/protein-glutamine glutaminase 3 (358 aa).

The 117-residue stretch at 2 to 118 (KILVVDDSAL…CGRLQEVAPL (117 aa)) folds into the Response regulatory domain. At aspartate 52 the chain carries 4-aspartylphosphate. The CheB-type methylesterase domain occupies 155–325 (NNEDHQLAIM…VPSMPEALLK (171 aa)). Residues serine 167, histidine 194, and aspartate 291 contribute to the active site.

It belongs to the CheB family. In terms of processing, phosphorylated by CheA. Phosphorylation of the N-terminal regulatory domain activates the methylesterase activity.

It localises to the cytoplasm. It carries out the reaction [protein]-L-glutamate 5-O-methyl ester + H2O = L-glutamyl-[protein] + methanol + H(+). It catalyses the reaction L-glutaminyl-[protein] + H2O = L-glutamyl-[protein] + NH4(+). In terms of biological role, involved in chemotaxis. Part of a chemotaxis signal transduction system that modulates chemotaxis in response to various stimuli. Catalyzes the demethylation of specific methylglutamate residues introduced into the chemoreceptors (methyl-accepting chemotaxis proteins or MCP) by CheR. Also mediates the irreversible deamidation of specific glutamine residues to glutamic acid. This is Protein-glutamate methylesterase/protein-glutamine glutaminase 3 from Vibrio cholerae serotype O1 (strain ATCC 39315 / El Tor Inaba N16961).